Here is a 248-residue protein sequence, read N- to C-terminus: MYTLVLIRHGESLWNRENRFTGWRDIDLSPQGIDEARAAGKALREQGFEFDLAYTSVLKRAIRTLWLIQEEMDLMWIPVIRTWRLNERHYGALTGLNKIETVEKYGEQQVHIWRRSYDIPPPAYTPDNLDNPSYHRRYQEIKRSDLPMTECLKDTVARFIPYWNDEIAPVIRSGKRVLITAHGNSLRALVKHLDNISDTDIPDLNIPTGIPLVYELDDNLKPVRSYYLGDEEKVKAAMEAVKNQGKAK.

Substrate contacts are provided by residues 8 to 15 (RHGESLWN), 21 to 22 (TG), arginine 60, 87 to 90 (ERHY), lysine 98, 114 to 115 (RR), and 183 to 184 (GN). Histidine 9 functions as the Tele-phosphohistidine intermediate in the catalytic mechanism. The Proton donor/acceptor role is filled by glutamate 87.

Belongs to the phosphoglycerate mutase family. BPG-dependent PGAM subfamily.

It carries out the reaction (2R)-2-phosphoglycerate = (2R)-3-phosphoglycerate. It functions in the pathway carbohydrate degradation; glycolysis; pyruvate from D-glyceraldehyde 3-phosphate: step 3/5. Its function is as follows. Catalyzes the interconversion of 2-phosphoglycerate and 3-phosphoglycerate. This is 2,3-bisphosphoglycerate-dependent phosphoglycerate mutase from Methanospirillum hungatei JF-1 (strain ATCC 27890 / DSM 864 / NBRC 100397 / JF-1).